A 709-amino-acid chain; its full sequence is Rho guanine nucleotide exchange factor 16 (709 aa).

An N-acetylalanine modification is found at Ala-2. Residues Ser-6, Ser-41, and Ser-107 each carry the phosphoserine modification. The segment at 22–70 (ELRLDAGGNPASGLPMVRGSPRVRDDAAFQPQVPAPPQPRPPGHEEPWP) is disordered. Residues 114-146 (SREAARRDPKLLPAPSFSLDDMDVDKDPGGMLR) form a disordered region. Phosphoserine is present on residues Ser-174, Ser-191, and Ser-208. A disordered region spans residues 180–246 (LAEEPSQPHT…ESSSPEGTQK (67 aa)). The span at 191–207 (SPAKNKKTLGRKRGHKG) shows a compositional bias: basic residues. Thr-226 carries the phosphothreonine modification. 3 positions are modified to phosphoserine: Ser-227, Ser-230, and Ser-240. The tract at residues 275 to 481 (LDQLSTEERK…MERMEQMYTL (207 aa)) is required for RHOG activation and mediates interaction with EPHA2. Residues 284 to 468 (KRQEAMFEIL…SKLVRQCNEG (185 aa)) form the DH domain. One can recognise a PH domain in the interval 501–620 (WLLKRGELFL…WIVALTHSER (120 aa)). Residues 629 to 689 (GDLPQVEITK…PEDFARFITS (61 aa)) enclose the SH3 domain. A PDZ-binding motif motif is present at residues 707–709 (TDV).

As to quaternary structure, interacts with ELMO2, EPHA2, RAC1 and RHOG; mediates activation of RAC1 by EPHA2. Interacts with TAX1BP3 (via PDZ domain). May interact with CDC42; stimulated by HPV16 E6.

Its subcellular location is the cytoplasm. In terms of biological role, guanyl-nucleotide exchange factor of the RHOG GTPase stimulating the exchange of RHOG-associated GDP for GTP. May play a role in chemotactic cell migration by mediating the activation of RAC1 by EPHA2. May also activate CDC42 and mediate activation of CDC42 by the viral protein HPV16 E6. The polypeptide is Rho guanine nucleotide exchange factor 16 (ARHGEF16) (Homo sapiens (Human)).